The chain runs to 109 residues: Nucleoid-associated protein plu3840 (109 aa).

Disordered stretches follow at residues methionine 1–lysine 23 and lysine 89–phenylalanine 109.

This sequence belongs to the YbaB/EbfC family. In terms of assembly, homodimer.

It is found in the cytoplasm. Its subcellular location is the nucleoid. Functionally, binds to DNA and alters its conformation. May be involved in regulation of gene expression, nucleoid organization and DNA protection. The protein is Nucleoid-associated protein plu3840 of Photorhabdus laumondii subsp. laumondii (strain DSM 15139 / CIP 105565 / TT01) (Photorhabdus luminescens subsp. laumondii).